Reading from the N-terminus, the 485-residue chain is MFS-type transporter phm3 (485 aa).

The interval 1-22 (MSLQDPTKEHNNTSPSPKDEKT) is disordered. 12 helical membrane passes run 55-75 (FTLYSNLAAVMFAPGAPLLVA), 83-103 (IVASLTVSIYILGFVFGPFLL), 113-133 (LWLYHICNLIYLAFTVGCALS), 144-164 (FICGCAASGPMTIGGGTIADL), 175-195 (ALFGLGPLLGPVIGPVVGGFV), 203-223 (WTFYLVLILAAIIAIAGAVIM), 278-298 (PIVLSLSVYCAFLFGLTYLLF), 317-337 (GLAFLGLGVGMIFGIALFAIL), 357-377 (LVLMVWSSPLVPIGFFWYGWS), 384-404 (WIVPIIGTAVIGIGAFLILMP), 421-441 (ALAVNTGLRSLFGAVLPLAGP), and 449-469 (LGWGNSVLAFIGLAFVPVPFV).

This sequence belongs to the major facilitator superfamily.

It is found in the cell membrane. In terms of biological role, MFS-type transporter; part of the gene cluster that mediates the biosynthesis of the trans-fused decalin-containing tetramic acid phomasetin. This chain is MFS-type transporter phm3, found in Pyrenochaetopsis sp.